The primary structure comprises 388 residues: Putative 8-amino-7-oxononanoate synthase (388 aa).

Position 22 (arginine 22) interacts with substrate. 109 to 110 serves as a coordination point for pyridoxal 5'-phosphate; it reads GY. Histidine 134 provides a ligand contact to substrate. Residues serine 182, 207–210, and 237–240 contribute to the pyridoxal 5'-phosphate site; these read DEAH and TLSK. N6-(pyridoxal phosphate)lysine is present on lysine 240. Threonine 354 serves as a coordination point for substrate.

Belongs to the class-II pyridoxal-phosphate-dependent aminotransferase family. BioF subfamily. As to quaternary structure, homodimer. Requires pyridoxal 5'-phosphate as cofactor.

The catalysed reaction is 6-carboxyhexanoyl-[ACP] + L-alanine + H(+) = (8S)-8-amino-7-oxononanoate + holo-[ACP] + CO2. It participates in cofactor biosynthesis; biotin biosynthesis. Functionally, catalyzes the decarboxylative condensation of pimeloyl-[acyl-carrier protein] and L-alanine to produce 8-amino-7-oxononanoate (AON), [acyl-carrier protein], and carbon dioxide. The polypeptide is Putative 8-amino-7-oxononanoate synthase (bioF) (Gloeobacter violaceus (strain ATCC 29082 / PCC 7421)).